Reading from the N-terminus, the 178-residue chain is Large ribosomal subunit protein uL6c (178 aa).

Belongs to the universal ribosomal protein uL6 family. As to quaternary structure, part of the 50S ribosomal subunit.

It is found in the plastid. The protein localises to the chloroplast. Binds 23S rRNA. The polypeptide is Large ribosomal subunit protein uL6c (rpl6) (Phaeodactylum tricornutum (strain CCAP 1055/1)).